Consider the following 215-residue polypeptide: UPF0502 protein Shal_1801 (215 aa).

It belongs to the UPF0502 family.

This Shewanella halifaxensis (strain HAW-EB4) protein is UPF0502 protein Shal_1801.